A 3101-amino-acid polypeptide reads, in one-letter code: Probable polyketide synthase 32 (3101 aa).

Residues 27 to 465 (SGDVAVIGIG…GSNVCLILSE (439 aa)) form the Ketosynthase family 3 (KS3) domain. Active-site for beta-ketoacyl synthase activity residues include C199, H338, and H388. An acyl/malonyl transferase region spans residues 664–697 (GVSADIIIGHSLGEVSSAYCSGMIDFETLCYLTY). The For acyl/malonyl transferase activity role is filled by S674. An N-terminal hotdog fold region spans residues 965–1087 (GPSINNLGNN…GNFSLTKHNS (123 aa)). The 323-residue stretch at 965 to 1287 (GPSINNLGNN…CTLVSLPNPE (323 aa)) folds into the PKS/mFAS DH domain. The active-site Proton acceptor; for dehydratase activity is H999. A C-terminal hotdog fold region spans residues 1104-1287 (NFTSISKQDL…CTLVSLPNPE (184 aa)). D1176 serves as the catalytic Proton donor; for dehydratase activity. The segment at 1209–1236 (KNGNNNDDDEESNNNNNNNNNNNNNNNN) is disordered. Residues 1221-1236 (NNNNNNNNNNNNNNNN) show a composition bias toward low complexity. The Carrier domain maps to 2550 to 2627 (DNNEIIRSTI…QSIEIIKSAN (78 aa)). At S2587 the chain carries O-(pantetheine 4'-phosphoryl)serine. The segment at 2627–2648 (NNKNNKNNNNNNNNKTNKNNNN) is disordered.

It depends on pantetheine 4'-phosphate as a cofactor.

Its function is as follows. Probable polyketide synthase. This Dictyostelium discoideum (Social amoeba) protein is Probable polyketide synthase 32 (pks32).